The following is a 178-amino-acid chain: MSQENTSSIIVVGKLGAPYGIKGWLKVHSFTDDPAGIFDFSPWLIGQQGKWQTLEVVDWRRHNKGFIAKFAQVNDRDEAVAYTHAEISMDSAQLPELPQGEFYWRDLIGMSVVTDKGYDLGIVDDLMETGSNDVLVVKANSKDAFGQAERLIPFLTDTVIIEVKHDAREITVDWDPGF.

Residues 99–178 form the PRC barrel domain; that stretch reads QGEFYWRDLI…EITVDWDPGF (80 aa).

This sequence belongs to the RimM family. Binds ribosomal protein uS19.

The protein resides in the cytoplasm. Functionally, an accessory protein needed during the final step in the assembly of 30S ribosomal subunit, possibly for assembly of the head region. Essential for efficient processing of 16S rRNA. May be needed both before and after RbfA during the maturation of 16S rRNA. It has affinity for free ribosomal 30S subunits but not for 70S ribosomes. This is Ribosome maturation factor RimM from Pseudoalteromonas translucida (strain TAC 125).